The primary structure comprises 138 residues: Large ribosomal subunit protein uL16 (138 aa).

This sequence belongs to the universal ribosomal protein uL16 family. In terms of assembly, part of the 50S ribosomal subunit.

Binds 23S rRNA and is also seen to make contacts with the A and possibly P site tRNAs. The polypeptide is Large ribosomal subunit protein uL16 (Chlamydia trachomatis serovar D (strain ATCC VR-885 / DSM 19411 / UW-3/Cx)).